The primary structure comprises 272 residues: MARLVAFDMDGTLLMPDHHLGEKTLSTLARLRERDITLTFATGRHALEMQHILGALSLDAYLITGNGTRVHSLEGELLHRDDLPADVAELVLYQQWDTRASMHIFNDDGWFTGKESPALLQVFVYSGFRYQIIDVKKMPLGSVTKICFCGDHDDLTRLQIQLYEALGERAHLCFSATDCLEVLPVGCNKGAALTVRTQHLGLSLRDCMAFGDAMNDREMLGSVGSGFIMGNAMPQLRAELPHLPVIGHCRNQAVSHYLTHWLDYPHLPYSPE.

Aspartate 8 acts as the Nucleophile in catalysis. The Mg(2+) site is built by aspartate 8, aspartate 10, and aspartate 212.

The protein belongs to the HAD-like hydrolase superfamily. Cof family. The cofactor is Mg(2+).

The catalysed reaction is 4-amino-2-methyl-5-(diphosphooxymethyl)pyrimidine + H2O = 4-amino-2-methyl-5-(phosphooxymethyl)pyrimidine + phosphate + H(+). Catalyzes the hydrolysis of 4-amino-2-methyl-5-hydroxymethylpyrimidine pyrophosphate (HMP-PP) to 4-amino-2-methyl-5-hydroxymethylpyrimidine phosphate (HMP-P). The sequence is that of HMP-PP phosphatase from Shigella flexneri serotype 5b (strain 8401).